The sequence spans 350 residues: Nuclear pore complex-interacting protein family member A3 (350 aa).

A disordered region spans residues 306 to 325 (KTPPECLLTPLPPSAPPSVD).

It belongs to the NPIP family.

In Homo sapiens (Human), this protein is Nuclear pore complex-interacting protein family member A3 (NPIPA3).